A 252-amino-acid polypeptide reads, in one-letter code: 5-oxoprolinase subunit A 1 (252 aa).

This sequence belongs to the LamB/PxpA family. In terms of assembly, forms a complex composed of PxpA, PxpB and PxpC.

It carries out the reaction 5-oxo-L-proline + ATP + 2 H2O = L-glutamate + ADP + phosphate + H(+). Its function is as follows. Catalyzes the cleavage of 5-oxoproline to form L-glutamate coupled to the hydrolysis of ATP to ADP and inorganic phosphate. This chain is 5-oxoprolinase subunit A 1, found in Pseudomonas aeruginosa (strain ATCC 15692 / DSM 22644 / CIP 104116 / JCM 14847 / LMG 12228 / 1C / PRS 101 / PAO1).